The chain runs to 104 residues: Secretoglobin family 3A member 1 (104 aa).

The N-terminal stretch at 1 to 20 (MKLAALLGLCVALSCSSAAA) is a signal peptide.

It belongs to the secretoglobin family. UGRP subfamily. As to quaternary structure, homodimer; disulfide-linked. In terms of tissue distribution, highly expressed in lung and prostate. Also found in mammary gland, spleen, pancreas, testis and liver. Detected throughout the airway epithelium in lung, with highest expression in large airways. Found in lung submucosal glands where it localizes to acinar and ductile cells. Not detected in respiratory bronchioles, alveolar ducts or alveolar epithelium. In mammary gland, specifically localizes to luminal epithelial cells.

Its subcellular location is the secreted. Secreted cytokine-like protein. Inhibits cell growth in vitro. This is Secretoglobin family 3A member 1 (SCGB3A1) from Homo sapiens (Human).